Consider the following 339-residue polypeptide: UPF0324 membrane protein M6_Spy0799 (339 aa).

The next 9 helical transmembrane spans lie at 7–24, 28–50, 57–79, 84–106, 118–140, 150–172, 256–275, 290–307, and 314–336; these read KLPG…AWYL, FPII…FYEH, GISF…GLNL, AVGM…VAYG, ATLV…APVI, AISV…GQLL, FILF…SLGV, FIVM…LVKL, and AILL…QLSL.

This sequence belongs to the UPF0324 family.

The protein localises to the cell membrane. The chain is UPF0324 membrane protein M6_Spy0799 from Streptococcus pyogenes serotype M6 (strain ATCC BAA-946 / MGAS10394).